The chain runs to 380 residues: Histone deacetylase-like amidohydrolase (380 aa).

The Proton donor/acceptor role is filled by His-144. Residues Asp-181, His-183, and Asp-269 each contribute to the Zn(2+) site.

The protein belongs to the histone deacetylase family. In terms of assembly, homotetramer; dimer of head-to-head dimers. The cofactor is Zn(2+).

With respect to regulation, is inhibited by azobenzenes, stilbenes and arylazopyrazoles. Probable protein deacetylase that catalyzes deacetylation of acetylated lysine residues. In vitro, exhibits high activity against artificial HDAC (histone deacetylase) substrates containing acetylated and trifluoroacetylated lysine residues. Is not able to deacetylate acetylated polyamines. This is Histone deacetylase-like amidohydrolase from Pseudomonas aeruginosa (strain ATCC 15692 / DSM 22644 / CIP 104116 / JCM 14847 / LMG 12228 / 1C / PRS 101 / PAO1).